Here is a 507-residue protein sequence, read N- to C-terminus: Keratin, type II cuticular Hb5 (507 aa).

Residues 1-123 (MSCRSYRISP…PNAQCVKYEE (123 aa)) form a head region. The 312-residue stretch at 123-434 (EKEQIKCLNS…RLLEGEEQRL (312 aa)) folds into the IF rod domain. The interval 124-158 (KEQIKCLNSKFAAFIDKVRFLEQQNKLLETKWQFY) is coil 1A. Positions 159–168 (QNRKCCESNL) are linker 1. Positions 169–269 (EPLFGGYIEA…YEEEVCVLQA (101 aa)) are coil 1B. K229 is covalently cross-linked (Glycyl lysine isopeptide (Lys-Gly) (interchain with G-Cter in SUMO1)). The linker 12 stretch occupies residues 270–286 (HISDTSVIVKMDNSRDL). Residues 287 to 430 (NMDCVVAEIK…ATYRRLLEGE (144 aa)) form a coil 2 region. The interval 431-507 (EQRLCEGVGS…CGSSRSVRFA (77 aa)) is tail.

Belongs to the intermediate filament family. Heterotetramer of two type I and two type II keratins.

This Mus musculus (Mouse) protein is Keratin, type II cuticular Hb5 (Krt85).